The following is an 88-amino-acid chain: MPKKPARTRRPAPLAGRARKKNLLDSLGLRTVDYKDTATLRVFISERGKIRSRQVTGLSVQQQRQVATAIKNAREMALLPYPGQGIKP.

Belongs to the bacterial ribosomal protein bS18 family. In terms of assembly, part of the 30S ribosomal subunit. Forms a tight heterodimer with protein bS6.

Its function is as follows. Binds as a heterodimer with protein bS6 to the central domain of the 16S rRNA, where it helps stabilize the platform of the 30S subunit. This is Small ribosomal subunit protein bS18B from Mycolicibacterium paratuberculosis (strain ATCC BAA-968 / K-10) (Mycobacterium paratuberculosis).